The chain runs to 352 residues: Quinolinate synthase (352 aa).

Iminosuccinate-binding residues include H48 and S69. Residue C114 participates in [4Fe-4S] cluster binding. Iminosuccinate is bound by residues 140–142 (YAN) and S157. [4Fe-4S] cluster is bound at residue C201. Iminosuccinate contacts are provided by residues 227 to 229 (HPE) and T244. C298 is a binding site for [4Fe-4S] cluster.

It belongs to the quinolinate synthase family. Type 1 subfamily. [4Fe-4S] cluster serves as cofactor.

The protein resides in the cytoplasm. The catalysed reaction is iminosuccinate + dihydroxyacetone phosphate = quinolinate + phosphate + 2 H2O + H(+). It functions in the pathway cofactor biosynthesis; NAD(+) biosynthesis; quinolinate from iminoaspartate: step 1/1. In terms of biological role, catalyzes the condensation of iminoaspartate with dihydroxyacetone phosphate to form quinolinate. The polypeptide is Quinolinate synthase (Pseudomonas syringae pv. tomato (strain ATCC BAA-871 / DC3000)).